The following is a 429-amino-acid chain: Inositol-3-phosphate synthase 1 (429 aa).

The helical transmembrane segment at 12–32 threads the bilayer; that stretch reads LGVLVVGVGGAVATTMIVGTL. A22, V23, D79, A116, A165, T167, Y201, S244, R276, D277, and K290 together coordinate NAD(+).

It belongs to the myo-inositol 1-phosphate synthase family. As to quaternary structure, homotetramer. NAD(+) is required as a cofactor.

It localises to the membrane. It catalyses the reaction D-glucose 6-phosphate = 1D-myo-inositol 3-phosphate. The protein operates within polyol metabolism; myo-inositol biosynthesis; myo-inositol from D-glucose 6-phosphate: step 1/2. Functionally, key enzyme in myo-inositol biosynthesis pathway that catalyzes the conversion of glucose 6-phosphate to 1D-myo-inositol 3-phosphate in a NAD-dependent manner. The protein is Inositol-3-phosphate synthase 1 of Bacteroides thetaiotaomicron (strain ATCC 29148 / DSM 2079 / JCM 5827 / CCUG 10774 / NCTC 10582 / VPI-5482 / E50).